A 604-amino-acid chain; its full sequence is Afamin (604 aa).

The N-terminal stretch at methionine 1–threonine 21 is a signal peptide. 3 consecutive Albumin domains span residues leucine 22–isoleucine 210, tyrosine 211–glutamate 403, and threonine 404–alanine 598. Disulfide bonds link cysteine 77-cysteine 86, cysteine 99-cysteine 114, cysteine 113-cysteine 124, cysteine 148-cysteine 193, cysteine 192-cysteine 201, cysteine 224-cysteine 270, cysteine 269-cysteine 277, cysteine 289-cysteine 303, cysteine 302-cysteine 313, cysteine 340-cysteine 385, cysteine 384-cysteine 393, cysteine 416-cysteine 462, cysteine 461-cysteine 470, cysteine 483-cysteine 499, cysteine 498-cysteine 509, cysteine 536-cysteine 581, and cysteine 580-cysteine 589. The N-linked (GlcNAc...) asparagine glycan is linked to asparagine 109. Residues alanine 215–lysine 319 form a binding pocket for hydrophobic ligands region. The N-linked (GlcNAc...) asparagine glycan is linked to asparagine 434.

This sequence belongs to the ALB/AFP/VDB family. In terms of assembly, forms a 1:1 complex with Wnt family members; interacts with WNT3A and WNT5A. Interacts with WNT1, WNT2B, WNT3, WNT7A, WNT7B, WNT8, WNT9A, WNT9B, WNT10A and WNT10B. Post-translationally, N-glycosylated; more than 90% of the glycans are sialylated.

The protein localises to the secreted. Functionally, functions as a carrier for hydrophobic molecules in body fluids. Essential for the solubility and activity of lipidated Wnt family members, including WNT1, WNT2B, WNT3, WNT3A, WNT5A, WNT7A, WNT7B, WNT8, WNT9A, WNT9B, WNT10A and WNT10B. Binds vitamin E. May transport vitamin E in body fluids under conditions where the lipoprotein system is not sufficient. May be involved in the transport of vitamin E across the blood-brain barrier. This is Afamin (AFM) from Bos taurus (Bovine).